The following is a 294-amino-acid chain: S-adenosylmethionine uptake transporter (294 aa).

The next 10 helical transmembrane spans lie at 8–28 (YLTG…NDVI), 41–61 (VAFF…VYYG), 74–91 (ILRG…TYGL), 98–118 (TATV…VFFL), 121–141 (NIIW…VVTL), 148–168 (FNPE…LDII), 177–197 (SMIS…LPVA), 207–227 (FELA…FFLL), 237–257 (ATAP…YFIF), and 260–280 (FPDK…LFII). EamA domains follow at residues 21 to 141 (SSSA…VVTL) and 160 to 280 (ISFA…LFII).

The protein belongs to the drug/metabolite transporter (DMT) superfamily. 10 TMS drug/metabolite exporter (DME) (TC 2.A.7.3) family.

It is found in the cell inner membrane. Transports S-adenosylmethionine. The polypeptide is S-adenosylmethionine uptake transporter (sam) (Rickettsia conorii (strain ATCC VR-613 / Malish 7)).